Consider the following 239-residue polypeptide: Phosphoribosylaminoimidazole-succinocarboxamide synthase (239 aa).

Belongs to the SAICAR synthetase family.

It carries out the reaction 5-amino-1-(5-phospho-D-ribosyl)imidazole-4-carboxylate + L-aspartate + ATP = (2S)-2-[5-amino-1-(5-phospho-beta-D-ribosyl)imidazole-4-carboxamido]succinate + ADP + phosphate + 2 H(+). The protein operates within purine metabolism; IMP biosynthesis via de novo pathway; 5-amino-1-(5-phospho-D-ribosyl)imidazole-4-carboxamide from 5-amino-1-(5-phospho-D-ribosyl)imidazole-4-carboxylate: step 1/2. The protein is Phosphoribosylaminoimidazole-succinocarboxamide synthase of Chlorobium luteolum (strain DSM 273 / BCRC 81028 / 2530) (Pelodictyon luteolum).